A 405-amino-acid polypeptide reads, in one-letter code: Terpene cyclase pbrA (405 aa).

6 residues coordinate Mg(2+): D103, E168, N229, S233, E237, and D241. A D(D/E)XX(D/E) motif motif is present at residues 103 to 108 (DDEISS). The NSE motif motif lies at 227–237 (LVNDLFSFYKE). Positions 316-323 (EDLGGSSA) match the WxxxxxRY motif motif.

It belongs to the trichodiene synthase family. It depends on Mg(2+) as a cofactor.

The protein operates within secondary metabolite biosynthesis; terpenoid biosynthesis. Terpene cyclase; part of the gene cluster that mediates the biosynthesis of the sesquiterpenoid aspterric acid (AA), an inhibitor of dihydroxy-acid dehydratase (DHAD) effective as an herbicide. PbrA cyclizes farnesyl diphosphate (FPP) to produce (-)-daucane. The cytochrome P450 monooxygenase pbrBB then converts (-)-daucane into the alpha-epoxy carboxylate intermediate which is further converted into the tricyclic aspterric acid by the cytochrome P450 monooxygenase pbrC. The sequence is that of Terpene cyclase pbrA from Penicillium brasilianum.